The following is a 172-amino-acid chain: Cytochrome c oxidase subunit 4 isoform 2, mitochondrial (172 aa).

A mitochondrion-targeting transit peptide spans 1–18; it reads MFSRATRSLVMKTGGLRT. The segment at 1 to 33 is disordered; it reads MFSRATRSLVMKTGGLRTQGTHSPGSAASSSQR. Over residues 16–33 the composition is skewed to polar residues; that stretch reads LRTQGTHSPGSAASSSQR. Topologically, residues 19-101 are mitochondrial matrix; that stretch reads QGTHSPGSAA…TFAEMNHRSN (83 aa). The helical transmembrane segment at 102–127 threads the bilayer; sequence EWKTVMGCVFFFIGFTALVIWWQRVY. At 128–172 the chain is on the mitochondrial intermembrane side; it reads VFPKKVVTLTEERKAQQLQRLLDMKSNPIQGLSAHWDYEKKEWKK.

It belongs to the cytochrome c oxidase IV family. As to quaternary structure, component of the cytochrome c oxidase (complex IV, CIV), a multisubunit enzyme composed of 14 subunits. The complex is composed of a catalytic core of 3 subunits MT-CO1, MT-CO2 and MT-CO3, encoded in the mitochondrial DNA, and 11 supernumerary subunits COX4I, COX5A, COX5B, COX6A, COX6B, COX6C, COX7A, COX7B, COX7C, COX8 and NDUFA4, which are encoded in the nuclear genome. The complex exists as a monomer or a dimer and forms supercomplexes (SCs) in the inner mitochondrial membrane with NADH-ubiquinone oxidoreductase (complex I, CI) and ubiquinol-cytochrome c oxidoreductase (cytochrome b-c1 complex, complex III, CIII), resulting in different assemblies (supercomplex SCI(1)III(2)IV(1) and megacomplex MCI(2)III(2)IV(2)). In terms of tissue distribution, highly expressed in lung.

The protein localises to the mitochondrion inner membrane. The protein operates within energy metabolism; oxidative phosphorylation. In terms of biological role, component of the cytochrome c oxidase, the last enzyme in the mitochondrial electron transport chain which drives oxidative phosphorylation. The respiratory chain contains 3 multisubunit complexes succinate dehydrogenase (complex II, CII), ubiquinol-cytochrome c oxidoreductase (cytochrome b-c1 complex, complex III, CIII) and cytochrome c oxidase (complex IV, CIV), that cooperate to transfer electrons derived from NADH and succinate to molecular oxygen, creating an electrochemical gradient over the inner membrane that drives transmembrane transport and the ATP synthase. Cytochrome c oxidase is the component of the respiratory chain that catalyzes the reduction of oxygen to water. Electrons originating from reduced cytochrome c in the intermembrane space (IMS) are transferred via the dinuclear copper A center (CU(A)) of subunit 2 and heme A of subunit 1 to the active site in subunit 1, a binuclear center (BNC) formed by heme A3 and copper B (CU(B)). The BNC reduces molecular oxygen to 2 water molecules using 4 electrons from cytochrome c in the IMS and 4 protons from the mitochondrial matrix. The sequence is that of Cytochrome c oxidase subunit 4 isoform 2, mitochondrial (Cox4i2) from Rattus norvegicus (Rat).